The primary structure comprises 202 residues: Prostamide/prostaglandin F synthase (202 aa).

Tyr-108 carries the phosphotyrosine modification.

The protein belongs to the peroxiredoxin-like PRXL2 family. Prostamide/prostaglandin F synthase subfamily.

The protein localises to the cytoplasm. It localises to the cytosol. It catalyses the reaction prostaglandin H2 + [thioredoxin]-dithiol = prostaglandin F2alpha + [thioredoxin]-disulfide. The catalysed reaction is prostamide F2alpha + [thioredoxin]-disulfide = prostamide H2 + [thioredoxin]-dithiol. Functionally, catalyzes the reduction of prostaglandin-ethanolamide H(2) (prostamide H(2)) to prostamide F(2alpha) with NADPH as proton donor. Also able to reduce prostaglandin H(2) to prostaglandin F(2alpha). This is Prostamide/prostaglandin F synthase (PRXL2B) from Sus scrofa (Pig).